A 217-amino-acid chain; its full sequence is Protein-L-isoaspartate O-methyltransferase 2 (217 aa).

S62 is an active-site residue.

Belongs to the methyltransferase superfamily. L-isoaspartyl/D-aspartyl protein methyltransferase family.

Its subcellular location is the cytoplasm. It catalyses the reaction [protein]-L-isoaspartate + S-adenosyl-L-methionine = [protein]-L-isoaspartate alpha-methyl ester + S-adenosyl-L-homocysteine. Functionally, catalyzes the methyl esterification of L-isoaspartyl residues in peptides and proteins that result from spontaneous decomposition of normal L-aspartyl and L-asparaginyl residues. It plays a role in the repair and/or degradation of damaged proteins. The protein is Protein-L-isoaspartate O-methyltransferase 2 of Geotalea uraniireducens (strain Rf4) (Geobacter uraniireducens).